The following is a 253-amino-acid chain: AA9 family lytic polysaccharide monooxygenase F (253 aa).

Positions 1-16 are cleaved as a signal peptide; that stretch reads MKVLATLLASVGLVAA. A Cu(2+)-binding site is contributed by His17. Asn22 carries an N-linked (GlcNAc...) asparagine glycan. Intrachain disulfides connect Cys75–Cys193 and Cys163–Cys253. His105 is a Cu(2+) binding site. N-linked (GlcNAc...) asparagine glycosylation occurs at Asn143. O2-binding residues include His179 and Gln188. Residue Tyr190 coordinates Cu(2+).

Belongs to the polysaccharide monooxygenase AA9 family. Requires Cu(2+) as cofactor.

The protein resides in the secreted. The enzyme catalyses [(1-&gt;4)-beta-D-glucosyl]n+m + reduced acceptor + O2 = 4-dehydro-beta-D-glucosyl-[(1-&gt;4)-beta-D-glucosyl]n-1 + [(1-&gt;4)-beta-D-glucosyl]m + acceptor + H2O.. Functionally, lytic polysaccharide monooxygenase (LPMO) that depolymerizes crystalline and amorphous polysaccharides via the oxidation of scissile alpha- or beta-(1-4)-glycosidic bonds, yielding C1 or C4 oxidation products. Catalysis by LPMOs requires the reduction of the active-site copper from Cu(II) to Cu(I) by a reducing agent and H(2)O(2) or O(2) as a cosubstrate. The protein is AA9 family lytic polysaccharide monooxygenase F of Podospora anserina (strain S / ATCC MYA-4624 / DSM 980 / FGSC 10383) (Pleurage anserina).